Here is a 432-residue protein sequence, read N- to C-terminus: Proline--tRNA ligase (432 aa).

Belongs to the class-II aminoacyl-tRNA synthetase family. ProS type 2 subfamily. Homodimer.

It is found in the cytoplasm. The enzyme catalyses tRNA(Pro) + L-proline + ATP = L-prolyl-tRNA(Pro) + AMP + diphosphate. In terms of biological role, catalyzes the attachment of proline to tRNA(Pro) in a two-step reaction: proline is first activated by ATP to form Pro-AMP and then transferred to the acceptor end of tRNA(Pro). This is Proline--tRNA ligase from Rickettsia bellii (strain OSU 85-389).